The sequence spans 456 residues: Iroquois-class homeodomain protein irx-2 (456 aa).

A DNA-binding region (homeobox; TALE-type) is located at residues 110–172 (DPAYRKNATR…NARRRLKKEN (63 aa)). Disordered stretches follow at residues 172–214 (NKMT…AEDE), 246–320 (CESG…PASK), and 434–456 (RPTN…QPYP). Composition is skewed to basic and acidic residues over residues 192–205 (GERV…KAQD) and 246–256 (CESGSESKEKY). Residues 257-269 (DDDEDEEEGDEED) show a composition bias toward acidic residues. Positions 291-318 (NHQQDGSPRNSNKTSLDNGMSPSSQTPA) are enriched in polar residues.

It belongs to the TALE/IRO homeobox family. In terms of tissue distribution, expressed in the neural plate in overlapping patterns with other irx members, which all share an anterior border of expression. Also expressed in the placodes. Broadly expressed in the tailbud rhombencephalon (hindbrain). Outside the nervous system and at tailbud stages, expressed in the developing otic vesicle, branchial arches, prospective heart region and pronephros.

It localises to the nucleus. Its function is as follows. Acts partially redundantly with other irx members in neural patterning. Required for formation of the posterior forebrain, midbrain, hindbrain, and to a lesser extent, spinal cord. Acts early in neural plate development to induce expression of some but not all proneural genes, and specify a neural precursor state. Also up-regulates repressors that prevent neuronal differentiation. Patterns the neuroectoderm in both the anterior/posterior and dorsal/ventral axes. Probably dispensable for pronephric kidney development. The protein is Iroquois-class homeodomain protein irx-2 of Xenopus tropicalis (Western clawed frog).